A 380-amino-acid chain; its full sequence is N5-carboxyaminoimidazole ribonucleotide synthase (380 aa).

ATP is bound by residues arginine 108, lysine 148, 153–159, 183–186, glutamate 191, histidine 214, and 268–269; these read GYDGKGQ, ESWV, and NE. An ATP-grasp domain is found at 112–298; the sequence is KKAIQSAGCE…QFEQHIRAVC (187 aa).

This sequence belongs to the PurK/PurT family. As to quaternary structure, homodimer.

The enzyme catalyses 5-amino-1-(5-phospho-beta-D-ribosyl)imidazole + hydrogencarbonate + ATP = 5-carboxyamino-1-(5-phospho-D-ribosyl)imidazole + ADP + phosphate + 2 H(+). It participates in purine metabolism; IMP biosynthesis via de novo pathway; 5-amino-1-(5-phospho-D-ribosyl)imidazole-4-carboxylate from 5-amino-1-(5-phospho-D-ribosyl)imidazole (N5-CAIR route): step 1/2. Catalyzes the ATP-dependent conversion of 5-aminoimidazole ribonucleotide (AIR) and HCO(3)(-) to N5-carboxyaminoimidazole ribonucleotide (N5-CAIR). This chain is N5-carboxyaminoimidazole ribonucleotide synthase, found in Bacillus subtilis (strain 168).